Reading from the N-terminus, the 357-residue chain is UPF0283 membrane protein BMEA_A1074 (357 aa).

Residues 1 to 36 (MSDKTPRKPTAFRLEQPARVSAASEQEEPRRPRAVK) form a disordered region. Basic and acidic residues predominate over residues 27–36 (EEPRRPRAVK). 2 consecutive transmembrane segments (helical) span residues 78–98 (ILFG…TEDL) and 109–129 (LGWT…AIIL).

It belongs to the UPF0283 family.

It is found in the cell inner membrane. In Brucella melitensis biotype 2 (strain ATCC 23457), this protein is UPF0283 membrane protein BMEA_A1074.